The primary structure comprises 812 residues: Endogenous retrovirus group K member 18 Pol protein (812 aa).

The region spanning 57 to 245 (LEKGHIEPSF…TPFHYLGMQI (189 aa)) is the Reverse transcriptase domain. The LPQG motif lies at 161–164 (LPQG). The short motif at 195–198 (YFDD) is the YXDD element. An RNase H type-1 domain is found at 460-590 (LENALTVFTD…ADLLVSSAFI (131 aa)). Residues D469, E497, D517, and D582 each coordinate Mg(2+). The segment at 587–628 (SAFIKAQELHALTHVNAAGLKNKFDVTWKQAKDIVQHCTQCQ) adopts an Integrase-type zinc-finger fold. Zn(2+) is bound by residues H596, H600, C624, and C627. In terms of domain architecture, Integrase catalytic spans 637 to 803 (AGVNPEVCVL…TSAEHLTGKK (167 aa)).

The protein belongs to the beta type-B retroviral polymerase family. HERV class-II K(HML-2) pol subfamily.

It carries out the reaction DNA(n) + a 2'-deoxyribonucleoside 5'-triphosphate = DNA(n+1) + diphosphate. It catalyses the reaction Endonucleolytic cleavage to 5'-phosphomonoester.. In terms of biological role, early post-infection, the reverse transcriptase converts the viral RNA genome into double-stranded viral DNA. The RNase H domain of the reverse transcriptase performs two functions. It degrades the RNA template and specifically removes the RNA primer from the RNA/DNA hybrid. Following nuclear import, the integrase catalyzes the insertion of the linear, double-stranded viral DNA into the host cell chromosome. Endogenous Pol proteins may have kept, lost or modified their original function during evolution. The chain is Endogenous retrovirus group K member 18 Pol protein (ERVK-18) from Homo sapiens (Human).